Reading from the N-terminus, the 426-residue chain is D-tagatose-1,6-bisphosphate aldolase subunit KbaZ (426 aa).

It belongs to the GatZ/KbaZ family. KbaZ subfamily. Forms a complex with KbaY.

It participates in carbohydrate metabolism; D-tagatose 6-phosphate degradation; D-glyceraldehyde 3-phosphate and glycerone phosphate from D-tagatose 6-phosphate: step 2/2. In terms of biological role, component of the tagatose-1,6-bisphosphate aldolase KbaYZ that is required for full activity and stability of the Y subunit. Could have a chaperone-like function for the proper and stable folding of KbaY. When expressed alone, KbaZ does not show any aldolase activity. This chain is D-tagatose-1,6-bisphosphate aldolase subunit KbaZ, found in Escherichia coli O157:H7.